The following is a 318-amino-acid chain: L-lactate dehydrogenase (318 aa).

Residues Val-15, Asp-36, and Lys-41 each coordinate NAD(+). Arg-89 contacts substrate. Residues Ser-102, 119–121 (ITN), and Thr-144 each bind NAD(+). Residue 121–124 (NPVD) coordinates substrate. 149–152 (DSAR) is a substrate binding site. The active-site Proton acceptor is His-176. Thr-231 lines the substrate pocket.

It belongs to the LDH/MDH superfamily. LDH family. As to quaternary structure, homotetramer.

It localises to the cytoplasm. The enzyme catalyses (S)-lactate + NAD(+) = pyruvate + NADH + H(+). It participates in fermentation; pyruvate fermentation to lactate; (S)-lactate from pyruvate: step 1/1. In terms of biological role, catalyzes the conversion of lactate to pyruvate. This chain is L-lactate dehydrogenase, found in Fusobacterium nucleatum subsp. nucleatum (strain ATCC 25586 / DSM 15643 / BCRC 10681 / CIP 101130 / JCM 8532 / KCTC 2640 / LMG 13131 / VPI 4355).